Reading from the N-terminus, the 202-residue chain is MGIIEEKALFVTCGATVPFPKLVSCVLSDEFCQELIQYGFVRLIIQFGRNYSSEFEHLVQERGGQRESQKIPIDQFGCGDTARQYVLMNGKLKVIGFDFSTKMQSIIRDYSDLVISHAGTGSILDSLRLNKPLIVCVNDSLMDNHQQQIADKFVELGYVWSCAPTETGLIAGLRASQTEKLKPFPVSHNPSFERLLVETIYS.

It belongs to the glycosyltransferase 28 family. In terms of assembly, heterodimer with ALG14 to form a functional enzyme.

It localises to the endoplasmic reticulum. It catalyses the reaction an N-acetyl-alpha-D-glucosaminyl-diphospho-di-trans,poly-cis-dolichol + UDP-N-acetyl-alpha-D-glucosamine = an N,N'-diacetylchitobiosyl-diphospho-di-trans,poly-cis-dolichol + UDP + H(+). Functionally, involved in protein N-glycosylation. Essential for the second step of the dolichol-linked oligosaccharide pathway. The sequence is that of UDP-N-acetylglucosamine transferase subunit ALG13 (ALG13) from Saccharomyces cerevisiae (strain ATCC 204508 / S288c) (Baker's yeast).